Consider the following 97-residue polypeptide: Small ribosomal subunit protein bS6 (97 aa).

This sequence belongs to the bacterial ribosomal protein bS6 family.

In terms of biological role, binds together with bS18 to 16S ribosomal RNA. The protein is Small ribosomal subunit protein bS6 of Lactococcus lactis subsp. cremoris (strain MG1363).